Here is a 248-residue protein sequence, read N- to C-terminus: MIKATYSSAKDFYSLLSGLLRVTDEIILNFTEDSIFSRYLTDDKVLMVIFKIPKEYLEDYTIDKPLGIKININDLKKILGKAKTKSATVTLEETEAGLKVTVRDEKTGTRSNIYIKGEKTSIDQLTEPKVNLSVTFTTDGDILKDIARDLSLVGEEVEISADENTVTLSTEEAGRTYKSLLRQDKPLKSLNIESPSKAVYSIEVLKDVFKVTTISQNVTVGFGNNIPMRIEVPTDSGGQLIFWIAPRL.

Belongs to the PCNA family. In terms of assembly, homotrimer. The subunits circularize to form a toroid; DNA passes through its center. Replication factor C (RFC) is required to load the toroid on the DNA.

In terms of biological role, sliding clamp subunit that acts as a moving platform for DNA processing. Responsible for tethering the catalytic subunit of DNA polymerase and other proteins to DNA during high-speed replication. The protein is DNA polymerase sliding clamp 2 of Sulfurisphaera ohwakuensis.